Reading from the N-terminus, the 441-residue chain is 3-phosphoshikimate 1-carboxyvinyltransferase (441 aa).

The interval 1-24 (MSGTGQSDDPRELKAGGSLQGRVK) is disordered. Residues Lys-29, Ser-30, and Arg-34 each contribute to the 3-phosphoshikimate site. Lys-29 contacts phosphoenolpyruvate. Phosphoenolpyruvate-binding residues include Gly-103 and Arg-132. Residues Ser-177, Gln-179, Asp-328, and Lys-355 each coordinate 3-phosphoshikimate. Phosphoenolpyruvate is bound at residue Gln-179. Asp-328 acts as the Proton acceptor in catalysis. The phosphoenolpyruvate site is built by Arg-359 and Arg-401.

Belongs to the EPSP synthase family. Monomer.

It localises to the cytoplasm. It catalyses the reaction 3-phosphoshikimate + phosphoenolpyruvate = 5-O-(1-carboxyvinyl)-3-phosphoshikimate + phosphate. The protein operates within metabolic intermediate biosynthesis; chorismate biosynthesis; chorismate from D-erythrose 4-phosphate and phosphoenolpyruvate: step 6/7. In terms of biological role, catalyzes the transfer of the enolpyruvyl moiety of phosphoenolpyruvate (PEP) to the 5-hydroxyl of shikimate-3-phosphate (S3P) to produce enolpyruvyl shikimate-3-phosphate and inorganic phosphate. The polypeptide is 3-phosphoshikimate 1-carboxyvinyltransferase (Synechococcus sp. (strain CC9605)).